The following is a 330-amino-acid chain: Small ribosomal subunit protein mS35 (330 aa).

A disordered region spans residues 50 to 73 (AAGKGVRGQMKPRRQAGEPRTERM). Residues 64–73 (QAGEPRTERM) are compositionally biased toward basic and acidic residues.

The protein belongs to the mitochondrion-specific ribosomal protein mS35 family. As to quaternary structure, component of the mitochondrial ribosome small subunit (28S) which comprises a 12S rRNA and about 30 distinct proteins.

It is found in the mitochondrion. The chain is Small ribosomal subunit protein mS35 (mrps35) from Danio rerio (Zebrafish).